We begin with the raw amino-acid sequence, 85 residues long: Large ribosomal subunit protein bL27 (85 aa).

A disordered region spans residues 1–21; it reads MAHKKGGGTTRNGRDSESKRL.

Belongs to the bacterial ribosomal protein bL27 family.

The chain is Large ribosomal subunit protein bL27 from Janthinobacterium sp. (strain Marseille) (Minibacterium massiliensis).